Reading from the N-terminus, the 256-residue chain is tRNA pseudouridine synthase A (256 aa).

Residue Asp-52 is the Nucleophile of the active site. Tyr-110 lines the substrate pocket.

Belongs to the tRNA pseudouridine synthase TruA family. As to quaternary structure, homodimer.

It carries out the reaction uridine(38/39/40) in tRNA = pseudouridine(38/39/40) in tRNA. Formation of pseudouridine at positions 38, 39 and 40 in the anticodon stem and loop of transfer RNAs. In Stenotrophomonas maltophilia (strain K279a), this protein is tRNA pseudouridine synthase A.